The primary structure comprises 450 residues: Phosphoglucosamine mutase 2 (450 aa).

The active-site Phosphoserine intermediate is serine 101. Mg(2+)-binding residues include serine 101, aspartate 245, aspartate 247, and aspartate 249. Serine 101 carries the phosphoserine modification.

This sequence belongs to the phosphohexose mutase family. The cofactor is Mg(2+). In terms of processing, activated by phosphorylation.

It catalyses the reaction alpha-D-glucosamine 1-phosphate = D-glucosamine 6-phosphate. In terms of biological role, catalyzes the conversion of glucosamine-6-phosphate to glucosamine-1-phosphate. This is Phosphoglucosamine mutase 2 from Shewanella frigidimarina (strain NCIMB 400).